Reading from the N-terminus, the 197-residue chain is MTMELNTHNAEILLSAANKSHYPQDELPEIALAGRSNVGKSSFINTMLNRKNLARTSGKPGKTQLLNFFNIDDKMRFVDVPGYGYARVSKKEREKWGRMIEEYLTTRENLRAVVSLVDLRHDPSADDVQMYEFLKYYEIPVIIVATKADKIPRGKWNKHESAIKKKLNFDPSDDFILFSSVSKAGMDEAWDAILEKL.

Residues 26-197 enclose the EngB-type G domain; the sequence is ELPEIALAGR…EAWDAILEKL (172 aa). Residues 34 to 41, 61 to 65, 79 to 82, 146 to 149, and 178 to 180 contribute to the GTP site; these read GRSNVGKS, GKTQL, DVPG, TKAD, and FSS. Positions 41 and 63 each coordinate Mg(2+).

The protein belongs to the TRAFAC class TrmE-Era-EngA-EngB-Septin-like GTPase superfamily. EngB GTPase family. Requires Mg(2+) as cofactor.

Its function is as follows. Necessary for normal cell division and for the maintenance of normal septation. The sequence is that of Probable GTP-binding protein EngB from Streptococcus pneumoniae (strain CGSP14).